A 222-amino-acid polypeptide reads, in one-letter code: Triosephosphate isomerase (222 aa).

10 to 12 (NCK) is a binding site for substrate. His93 serves as the catalytic Electrophile. Catalysis depends on Glu141, which acts as the Proton acceptor. Substrate is bound by residues Ile146, Gly180, and 201-202 (AS).

The protein belongs to the triosephosphate isomerase family. In terms of assembly, homotetramer; dimer of dimers.

Its subcellular location is the cytoplasm. The catalysed reaction is D-glyceraldehyde 3-phosphate = dihydroxyacetone phosphate. It participates in carbohydrate biosynthesis; gluconeogenesis. The protein operates within carbohydrate degradation; glycolysis; D-glyceraldehyde 3-phosphate from glycerone phosphate: step 1/1. In terms of biological role, involved in the gluconeogenesis. Catalyzes stereospecifically the conversion of dihydroxyacetone phosphate (DHAP) to D-glyceraldehyde-3-phosphate (G3P). The sequence is that of Triosephosphate isomerase from Cenarchaeum symbiosum (strain A).